A 237-amino-acid chain; its full sequence is Uridylate kinase (237 aa).

11 to 14 (KLSG) serves as a coordination point for ATP. Gly-52 contacts UMP. ATP-binding residues include Gly-53 and Arg-57. Residues Asp-72 and 134–141 (TGYSYFTT) each bind UMP. Positions 162, 168, and 171 each coordinate ATP.

It belongs to the UMP kinase family. As to quaternary structure, homohexamer.

Its subcellular location is the cytoplasm. It catalyses the reaction UMP + ATP = UDP + ADP. The protein operates within pyrimidine metabolism; CTP biosynthesis via de novo pathway; UDP from UMP (UMPK route): step 1/1. Inhibited by UTP. In terms of biological role, catalyzes the reversible phosphorylation of UMP to UDP. The sequence is that of Uridylate kinase from Mycoplasma capricolum subsp. capricolum (strain California kid / ATCC 27343 / NCTC 10154).